Consider the following 166-residue polypeptide: NAD(P)H-quinone oxidoreductase subunit I, chloroplastic (166 aa).

4Fe-4S ferredoxin-type domains lie at 55 to 84 and 95 to 124; these read GRIH…VDWK and LNYS…MTEE. Residues Cys64, Cys67, Cys70, Cys74, Cys104, Cys107, Cys110, and Cys114 each coordinate [4Fe-4S] cluster.

The protein belongs to the complex I 23 kDa subunit family. In terms of assembly, NDH is composed of at least 16 different subunits, 5 of which are encoded in the nucleus. It depends on [4Fe-4S] cluster as a cofactor.

The protein localises to the plastid. Its subcellular location is the chloroplast thylakoid membrane. It carries out the reaction a plastoquinone + NADH + (n+1) H(+)(in) = a plastoquinol + NAD(+) + n H(+)(out). It catalyses the reaction a plastoquinone + NADPH + (n+1) H(+)(in) = a plastoquinol + NADP(+) + n H(+)(out). Functionally, NDH shuttles electrons from NAD(P)H:plastoquinone, via FMN and iron-sulfur (Fe-S) centers, to quinones in the photosynthetic chain and possibly in a chloroplast respiratory chain. The immediate electron acceptor for the enzyme in this species is believed to be plastoquinone. Couples the redox reaction to proton translocation, and thus conserves the redox energy in a proton gradient. In Oblivia mikanioides (Salmea mikanioides), this protein is NAD(P)H-quinone oxidoreductase subunit I, chloroplastic.